We begin with the raw amino-acid sequence, 75 residues long: Small ribosomal subunit protein bS18c (75 aa).

Residues 1 to 12 (MNKSKRSFRRRL) are compositionally biased toward basic residues. The interval 1-21 (MNKSKRSFRRRLPPIGSRDQI) is disordered.

Belongs to the bacterial ribosomal protein bS18 family. As to quaternary structure, part of the 30S ribosomal subunit.

The protein localises to the plastid. It is found in the chloroplast. This is Small ribosomal subunit protein bS18c from Cycas taitungensis (Prince sago).